The sequence spans 141 residues: Large ribosomal subunit protein uL16 (141 aa).

It belongs to the universal ribosomal protein uL16 family. As to quaternary structure, part of the 50S ribosomal subunit.

Binds 23S rRNA and is also seen to make contacts with the A and possibly P site tRNAs. The protein is Large ribosomal subunit protein uL16 of Campylobacter fetus subsp. fetus (strain 82-40).